A 110-amino-acid polypeptide reads, in one-letter code: Phosphoribosyl-AMP cyclohydrolase (110 aa).

Position 80 (Asp-80) interacts with Mg(2+). Cys-81 is a Zn(2+) binding site. Positions 82 and 84 each coordinate Mg(2+). Residues Cys-97 and Cys-104 each coordinate Zn(2+).

The protein belongs to the PRA-CH family. Homodimer. Requires Mg(2+) as cofactor. It depends on Zn(2+) as a cofactor.

It localises to the cytoplasm. It carries out the reaction 1-(5-phospho-beta-D-ribosyl)-5'-AMP + H2O = 1-(5-phospho-beta-D-ribosyl)-5-[(5-phospho-beta-D-ribosylamino)methylideneamino]imidazole-4-carboxamide. It participates in amino-acid biosynthesis; L-histidine biosynthesis; L-histidine from 5-phospho-alpha-D-ribose 1-diphosphate: step 3/9. In terms of biological role, catalyzes the hydrolysis of the adenine ring of phosphoribosyl-AMP. The protein is Phosphoribosyl-AMP cyclohydrolase of Clostridium botulinum (strain Okra / Type B1).